We begin with the raw amino-acid sequence, 479 residues long: PTS system glucose-specific EIICB component (479 aa).

Residues 1-388 (MFKNAFSNLQ…FNLKTPGREK (388 aa)) enclose the PTS EIIC type-1 domain. 9 helical membrane passes run 15-35 (SLML…IGSA), 51-71 (AGSS…ALGF), 80-100 (LAAV…IPIF), 112-132 (YLLD…AYIF), 152-172 (FVPI…SIIW), 252-272 (GGFI…WHCA), 280-300 (IGGI…TEPI), 305-325 (ILVA…AFPI), and 356-376 (LFPI…YFMI). Positions 399 to 479 (KETALLVISI…IDNYMSNTNQ (81 aa)) constitute a PTS EIIB type-1 domain. Residue Cys-421 is the Phosphocysteine intermediate; for EIIB activity of the active site. Cys-421 carries the post-translational modification Phosphocysteine.

The protein resides in the cell inner membrane. The catalysed reaction is N(pros)-phospho-L-histidyl-[protein] + D-glucose(out) = D-glucose 6-phosphate(in) + L-histidyl-[protein]. In terms of biological role, the phosphoenolpyruvate-dependent sugar phosphotransferase system (sugar PTS), a major carbohydrate active transport system, catalyzes the phosphorylation of incoming sugar substrates concomitantly with their translocation across the cell membrane. The enzyme II complex composed of PtsG and Crr is involved in glucose transport. The sequence is that of PTS system glucose-specific EIICB component (ptsG) from Buchnera aphidicola subsp. Baizongia pistaciae (strain Bp).